The sequence spans 582 residues: MQETDLSIIKTFKRLFPIIRNYKWGLIAASVALILNALVDSSLIYLLKPLLDDGFGKADNAFLKQMAILVMLFILLRGVSNYIASYCLSWVSGKVVMTLRRNIFQHLMYMPVSYFDKNPTGRLLSRVTYDTEMVASSSSYVLVTIVREGAYLISLFAVMVYTSWQLSIVLFLLAPIIAFLISIVSKRFRILSRNIQNSMGELTVTTEQMLKGHKVVLSFGGQKVEKARFDRVSNDMRRKGMKIVSADGISDGLVQLIASLALSAVLYVATFPEVMSENLTAGSFTVVFSSMMAMLRPLKSLTSVNSQFQRGMAACQTLFEFLDLKTEKNNGTKQVERAQGCITFDNVIFSYEGKEEQALNQVSFTIPQGKTVALVGRSGSGKSTIASLLTRFYDVNEGQILLDGVNIEEYTLENLREQCSVVSQQVHLFNDTIANNIAYAAKDKYSRAQIIAAAQAAHAMEFIEKLEQGLDTVIGENGASLSGGQRQRLAIARALLRNAPVLVLDEATSALDTESELAIQSALAALQKNKTVLVIAHRLSTIEKADEILVVDQGKIVERGSHEQLLAKGGAYKQLYSMQFSE.

5 consecutive transmembrane segments (helical) span residues 26-46 (LIAA…LIYL), 68-88 (ILVM…SYCL), 140-160 (YVLV…AVMV), 164-184 (WQLS…ISIV), and 252-272 (GLVQ…ATFP). The ABC transmembrane type-1 domain occupies 27–310 (IAASVALILN…LTSVNSQFQR (284 aa)). The 237-residue stretch at 342 to 578 (ITFDNVIFSY…GGAYKQLYSM (237 aa)) folds into the ABC transporter domain. An ATP-binding site is contributed by 376–383 (GRSGSGKS).

The protein belongs to the ABC transporter superfamily. Lipid exporter (TC 3.A.1.106) family. As to quaternary structure, homodimer.

The protein resides in the cell inner membrane. It carries out the reaction ATP + H2O + lipid A-core oligosaccharideSide 1 = ADP + phosphate + lipid A-core oligosaccharideSide 2.. Its function is as follows. Involved in lipopolysaccharide (LPS) biosynthesis. Translocates lipid A-core from the inner to the outer leaflet of the inner membrane. Transmembrane domains (TMD) form a pore in the inner membrane and the ATP-binding domain (NBD) is responsible for energy generation. This chain is ATP-dependent lipid A-core flippase, found in Haemophilus ducreyi (strain 35000HP / ATCC 700724).